The sequence spans 147 residues: MVHFTAEEKAAVTSLWNKMNVEEAGGEALGRLLVVYPWTQRFFDSFGNLSSPSAILGNPKVKAHGKKVLTSFGDAIKNMDNLKTTFAKLSELHCDKLHVDPENFKLLGNVMVIILATHFGKEFTPEVQAAWQKLVSAVAIALAHKYH.

The Globin domain occupies 3–147 (HFTAEEKAAV…VAIALAHKYH (145 aa)). Phosphoserine occurs at positions 14 and 51. H64 and H93 together coordinate heme b.

This sequence belongs to the globin family. As to quaternary structure, heterotetramer of two alpha chains and two epsilon chains in early embryonic hemoglobin Gower-2; two zeta chains and two epsilon chains in early embryonic hemoglobin Gower-1. As to expression, red blood cells.

In terms of biological role, the epsilon chain is a beta-type chain of early mammalian embryonic hemoglobin. This is Hemoglobin subunit epsilon (HBE1) from Symphalangus syndactylus (Siamang).